The sequence spans 926 residues: LPS-assembly protein LptD (926 aa).

An N-terminal signal peptide occupies residues 1–22 (MALKSPAFRKKFPLLVTGSLLA). Residues 58-99 (VDLPPRPVHDTTSVSSNGTVTSQSTSSGEQVAGTQLVTEAKG) are disordered. The segment covering 68 to 85 (TTSVSSNGTVTSQSTSSG) has biased composition (low complexity).

This sequence belongs to the LptD family. Component of the lipopolysaccharide transport and assembly complex. Interacts with LptE and LptA.

The protein localises to the cell outer membrane. Together with LptE, is involved in the assembly of lipopolysaccharide (LPS) at the surface of the outer membrane. In Pseudomonas savastanoi pv. phaseolicola (strain 1448A / Race 6) (Pseudomonas syringae pv. phaseolicola (strain 1448A / Race 6)), this protein is LPS-assembly protein LptD.